The following is a 33-amino-acid chain: Photosystem II reaction center protein Psb30 (33 aa).

The helical transmembrane segment at 5–25 threads the bilayer; that stretch reads VIAQLTVLTLMVVSGPLVIVL.

The protein belongs to the Psb30/Ycf12 family. In terms of assembly, PSII is composed of 1 copy each of membrane proteins PsbA, PsbB, PsbC, PsbD, PsbE, PsbF, PsbH, PsbI, PsbJ, PsbK, PsbL, PsbM, PsbT, PsbX, PsbY, PsbZ, Psb30/Ycf12, peripheral proteins of the oxygen-evolving complex and a large number of cofactors. It forms dimeric complexes.

The protein resides in the plastid. It is found in the chloroplast thylakoid membrane. Its function is as follows. A core subunit of photosystem II (PSII), probably helps stabilize the reaction center. This is Photosystem II reaction center protein Psb30 from Pinus koraiensis (Korean pine).